A 546-amino-acid chain; its full sequence is Coatomer subunit delta (546 aa).

An interaction with DSL1 region spans residues 190–440 (NRFMGSKDPN…VIFTIPVFPQ (251 aa)). Residues 236-287 (PMATSQRAGHSATGGMKLGGGAGRRAGAAPRPSAISSASSGTPPPPEEDVPE) are disordered. The span at 260-276 (RAGAAPRPSAISSASSG) shows a compositional bias: low complexity. A Phosphothreonine modification is found at T277. Positions 288–546 (NNGILISIKE…SLKSDEYLVQ (259 aa)) constitute an MHD domain.

This sequence belongs to the adaptor complexes medium subunit family. Delta-COP subfamily. Oligomeric complex that consists of at least the alpha, beta, beta', gamma, delta, epsilon and zeta subunits. Interacts with DSL1.

Its subcellular location is the cytoplasm. The protein resides in the golgi apparatus membrane. It localises to the cytoplasmic vesicle. It is found in the COPI-coated vesicle membrane. Functionally, the coatomer is a cytosolic protein complex that binds to dilysine motifs and reversibly associates with Golgi non-clathrin-coated vesicles, which further mediate biosynthetic protein transport from the ER, via the Golgi up to the trans Golgi network. Coatomer complex is required for budding from Golgi membranes, and is essential for the retrograde Golgi-to-ER transport of dilysine-tagged proteins. The chain is Coatomer subunit delta (RET2) from Saccharomyces cerevisiae (strain ATCC 204508 / S288c) (Baker's yeast).